The following is a 411-amino-acid chain: MAAEAGGGEPLVKFVKLSGRAAGSKKKVRWFPVRRLFTHSCPSLRIPSRFLREGRRSPPARSGHRCVADNTNLYVFGGYNPDYDESGGPENEDYPLFRELWRYHFATGMWHQMGTDGHMPRELASMSLVLHGHNLLVFGGTGIPFGESNGNDVYVCNVKYKRWSKLNCRGKKPNRIYGQAMAIIHGFLYVFGGTTGYIYSTDLHRLDLSTREWIQLKPNNPPCDLPEERYRHEIAHDGQRIYVLGGGTSWTAYSLEKIHAYNFETNTWEDIPTKPYGNLGFPAARRCHSCVQIKNEVFICGGYNGLVILGDLWKLDLQTFQWTKLPALMPEPAYFHCAAVTPAGCMYIHGGVVNIQQNKRTGSLFKIWLVVPSLLELCWENLLKYFPHLCQLPTHQLLQLGLSQELIERLK.

Kelch repeat units follow at residues 72–133, 135–186, 187–239, 240–288, 296–342, and 345–388; these read NLYV…LHGH, LLVF…IIHG, FLYV…HDGQ, RIYV…RRCH, EVFI…AVTP, and CMYI…YFPH.

The protein belongs to the KLHDC10 family. As to quaternary structure, component of a CRL2 E3 ubiquitin-protein ligase complex, also named ECS (Elongin BC-CUL2/5-SOCS-box protein) complex, composed of CUL2, Elongin BC (ELOB and ELOC), RBX1 and substrate-specific adapter KLHDC10.

Its pathway is protein modification; protein ubiquitination. Its function is as follows. Substrate-recognition component of a Cul2-RING (CRL2) E3 ubiquitin-protein ligase complex of the DesCEND (destruction via C-end degrons) pathway, which recognizes a C-degron located at the extreme C terminus of target proteins, leading to their ubiquitination and degradation. The C-degron recognized by the DesCEND pathway is usually a motif of less than ten residues and can be present in full-length proteins, truncated proteins or proteolytically cleaved forms. The CRL2(KLHDC10) complex specifically recognizes proteins with a proline-glycine (Pro-Gly) or an alanine tail (CAT tail) at the C-terminus, leading to their ubiquitination and degradation. The CRL2(KLHDC10) complex is involved in the ribosome-associated quality control (RQC) pathway, which mediates the extraction of incompletely synthesized nascent chains from stalled ribosomes: CRL2(KLHDC10) acts downstream of NEMF and recognizes CAT tails associated with stalled nascent chains, leading to their ubiquitination and degradation. The polypeptide is Kelch domain-containing protein 10 (Xenopus tropicalis (Western clawed frog)).